A 275-amino-acid chain; its full sequence is MASRVNIVQVQILDNPAMFVDKFKLEITFEVFEHLPHDLEWELVYVGSGTSRDFDQVLDSALVGPIPEGRHKFVFDADHPDISKIPVDDIVGVSVLLLRCKYNDQEFINMGWFVANEYTEEELKENPPSQPLIEKLSRKVETEDLRITTFPIRWTDEDPVAEPVEDEANRVFAEDDLMPLNDDGQEDDDEEEEDDDEMEANAEEVDLNESFNERLANALDGAEQKGADEKMEDDGANEDVDMADDEPGVQINTDTKVPESMAEPLSDKTNNEMVQ.

3 stretches are compositionally biased toward acidic residues: residues 157-166 (EDPVAEPVED), 183-207 (DGQE…EVDL), and 230-247 (KMED…DDEP). Residues 157–275 (EDPVAEPVED…SDKTNNEMVQ (119 aa)) are disordered. Basic and acidic residues predominate over residues 265–275 (LSDKTNNEMVQ).

This sequence belongs to the ASF1 family. As to quaternary structure, interacts with histone H3 and histone H4.

The protein resides in the nucleus. Functionally, histone chaperone that facilitates histone deposition and histone exchange and removal during nucleosome assembly and disassembly. The protein is Probable histone chaperone asf-1 of Caenorhabditis elegans.